We begin with the raw amino-acid sequence, 287 residues long: Probable ABC transporter extracellular-binding protein YckB (287 aa).

The N-terminal stretch at 1–24 (MKSFMHSKAVIFSFTMAFFLILAA) is a signal peptide. Cys-25 is lipidated: N-palmitoyl cysteine. Cys-25 carries the S-diacylglycerol cysteine lipid modification.

Belongs to the bacterial solute-binding protein 3 family.

Its subcellular location is the cell membrane. Functionally, probably part of a binding-protein-dependent transport system. This is Probable ABC transporter extracellular-binding protein YckB (yckB) from Bacillus subtilis (strain 168).